A 232-amino-acid polypeptide reads, in one-letter code: Sugar fermentation stimulation protein homolog (232 aa).

The protein belongs to the SfsA family.

In Alkaliphilus metalliredigens (strain QYMF), this protein is Sugar fermentation stimulation protein homolog.